We begin with the raw amino-acid sequence, 225 residues long: Phosphoserine phosphatase (225 aa).

N-acetylmethionine is present on Met1. Residue Asp20 is the Nucleophile of the active site. Mg(2+)-binding residues include Asp20 and Asp22. L-serine is bound at residue 20–22 (DVD). Asp22 acts as the Proton donor in catalysis. Position 52 (Met52) interacts with O-phospho-L-serine. Gly53 is a phosphate binding site. Residues 109–111 (SGG) and Lys158 contribute to the L-serine site. O-phospho-L-serine is bound by residues 109 to 111 (SGG) and Lys158. Residue Asp179 participates in Mg(2+) binding. An O-phospho-L-serine-binding site is contributed by Thr182. Position 182 (Thr182) interacts with phosphate.

This sequence belongs to the HAD-like hydrolase superfamily. SerB family. In terms of assembly, homodimer. Requires Mg(2+) as cofactor.

The protein resides in the cytoplasm. It localises to the cytosol. The enzyme catalyses O-phospho-L-serine + H2O = L-serine + phosphate. It catalyses the reaction O-phospho-D-serine + H2O = D-serine + phosphate. Its pathway is amino-acid biosynthesis; L-serine biosynthesis; L-serine from 3-phospho-D-glycerate: step 3/3. Functionally, catalyzes the last irreversible step in the biosynthesis of L-serine from carbohydrates, the dephosphorylation of O-phospho-L-serine to L-serine. L-serine can then be used in protein synthesis, to produce other amino acids, in nucleotide metabolism or in glutathione synthesis, or can be racemized to D-serine, a neuromodulator. May also act on O-phospho-D-serine. The polypeptide is Phosphoserine phosphatase (Bos taurus (Bovine)).